The sequence spans 530 residues: Retinoic acid-induced protein 2 (530 aa).

Positions 1 to 13 are enriched in polar residues; it reads MDDLQSQNLSMDM. The segment at 1 to 22 is disordered; that stretch reads MDDLQSQNLSMDMTDSPPALAN.

This Homo sapiens (Human) protein is Retinoic acid-induced protein 2 (RAI2).